The chain runs to 1006 residues: Kinesin-like protein KIN-5C (1006 aa).

A Kinesin motor domain is found at 9-355 (NVQVLLRCRP…LDYAHRAKNI (347 aa)). 95–102 (GQTGTGKT) is a binding site for ATP. Positions 371–522 (IKDLYGEIER…NASLFQKIAR (152 aa)) form a coiled coil.

This sequence belongs to the TRAFAC class myosin-kinesin ATPase superfamily. Kinesin family. KIN-5/BimC subfamily.

The protein localises to the cytoplasm. It localises to the cytoskeleton. The protein resides in the spindle. Responsible for microtubule translocation. May be important for the organization of phragmoplast-specific arrays of microtubules. Plays an essential role in stabilizing the mitotic spindle. Required during mitotic cytokinesis. This Nicotiana tabacum (Common tobacco) protein is Kinesin-like protein KIN-5C.